Here is a 280-residue protein sequence, read N- to C-terminus: MSLIREIAGGPYALAAGPDGAMWVTLVHDGAIARVGADGAVDRFPVADGSRPSLISAGPDGALWFTRNGDDRIGRLTTAGELTEFPLSEGSAPFGICAGADGALWFTEMGSGGIGRITVDGQTSGWASVGGTPSMITRGPDDAVWFTLNQGNAIGRLHPRDGVTMRELPTRGAGPVGITATHDDAIWFTEILADKLGRIPLDGALQEIDLPGKPHAVVADPSGGVWVSLWGADRLARVSADGDIETFDLPPGSEPHGLAFGPDGGLWVALESGFVLRMPD.

H215 is a substrate binding site. E254 lines the Mg(2+) pocket. The Proton acceptor role is filled by H256. A Mg(2+)-binding site is contributed by E271.

The protein belongs to the Vgb family. In terms of assembly, monomer. It depends on Mg(2+) as a cofactor.

In terms of biological role, inactivates the type B streptogramin antibiotics by linearizing the lactone ring at the ester linkage, generating a free phenylglycine carboxylate and converting the threonyl moiety into 2-amino-butenoic acid. The chain is Virginiamycin B lyase from Mycobacterium sp. (strain KMS).